A 131-amino-acid chain; its full sequence is Large ribosomal subunit protein uL22c (131 aa).

The protein belongs to the universal ribosomal protein uL22 family. Part of the 50S ribosomal subunit.

Its subcellular location is the plastid. This protein binds specifically to 23S rRNA. Functionally, the globular domain of the protein is located near the polypeptide exit tunnel on the outside of the subunit, while an extended beta-hairpin is found that lines the wall of the exit tunnel in the center of the 70S ribosome. The polypeptide is Large ribosomal subunit protein uL22c (rpl22) (Aneura mirabilis (Parasitic liverwort)).